The chain runs to 302 residues: Sulfate adenylyltransferase subunit 2 (302 aa).

A disordered region spans residues 280 to 302 (RQGRAIDHDQSGSMELKKRQGYF).

The protein belongs to the PAPS reductase family. CysD subfamily. In terms of assembly, heterodimer composed of CysD, the smaller subunit, and CysN.

The enzyme catalyses sulfate + ATP + H(+) = adenosine 5'-phosphosulfate + diphosphate. Its pathway is sulfur metabolism; hydrogen sulfide biosynthesis; sulfite from sulfate: step 1/3. Its function is as follows. With CysN forms the ATP sulfurylase (ATPS) that catalyzes the adenylation of sulfate producing adenosine 5'-phosphosulfate (APS) and diphosphate, the first enzymatic step in sulfur assimilation pathway. APS synthesis involves the formation of a high-energy phosphoric-sulfuric acid anhydride bond driven by GTP hydrolysis by CysN coupled to ATP hydrolysis by CysD. The sequence is that of Sulfate adenylyltransferase subunit 2 from Vibrio cholerae serotype O1 (strain ATCC 39315 / El Tor Inaba N16961).